The chain runs to 542 residues: Chaperonin GroEL (542 aa).

Residues 29-32, 86-90, G413, 476-478, and D492 each bind ATP; these read TLGP, DGTTT, and NAA.

This sequence belongs to the chaperonin (HSP60) family. Forms a cylinder of 14 subunits composed of two heptameric rings stacked back-to-back. Interacts with the co-chaperonin GroES.

The protein resides in the cytoplasm. It carries out the reaction ATP + H2O + a folded polypeptide = ADP + phosphate + an unfolded polypeptide.. In terms of biological role, together with its co-chaperonin GroES, plays an essential role in assisting protein folding. The GroEL-GroES system forms a nano-cage that allows encapsulation of the non-native substrate proteins and provides a physical environment optimized to promote and accelerate protein folding. The sequence is that of Chaperonin GroEL from Lactococcus lactis subsp. lactis (strain IL1403) (Streptococcus lactis).